The chain runs to 432 residues: Asparagine--tRNA ligase (432 aa).

Belongs to the class-II aminoacyl-tRNA synthetase family. As to quaternary structure, homodimer.

The protein localises to the cytoplasm. It carries out the reaction tRNA(Asn) + L-asparagine + ATP = L-asparaginyl-tRNA(Asn) + AMP + diphosphate + H(+). This Limosilactobacillus reuteri (strain DSM 20016) (Lactobacillus reuteri) protein is Asparagine--tRNA ligase.